A 587-amino-acid chain; its full sequence is Bifunctional dihydrofolate reductase-thymidylate synthase (587 aa).

One can recognise a DHFR domain in the interval 9-237 (DIYAICACCK…TTLDFIIYSK (229 aa)). Residue 36 to 42 (GIGNAGV) coordinates NADP(+). Aspartate 51 provides a ligand contact to substrate. NADP(+) is bound by residues 108–110 (KKS) and 129–132 (LSRT). Substrate contacts are provided by isoleucine 173, tyrosine 179, and threonine 194. NADP(+) is bound at residue 174-181 (GGSSVYKE). The thymidylate synthase stretch occupies residues 301-587 (NHPEYQYLNI…HDKINMDMAA (287 aa)). Arginine 324 contacts dUMP. Cysteine 469 is a catalytic residue. Residues histidine 470, 488–492 (QRSCD), asparagine 500, and 530–532 (HVY) contribute to the dUMP site.

It in the N-terminal section; belongs to the dihydrofolate reductase family. In the C-terminal section; belongs to the thymidylate synthase family. In terms of assembly, homodimer.

It catalyses the reaction (6S)-5,6,7,8-tetrahydrofolate + NADP(+) = 7,8-dihydrofolate + NADPH + H(+). It carries out the reaction dUMP + (6R)-5,10-methylene-5,6,7,8-tetrahydrofolate = 7,8-dihydrofolate + dTMP. It functions in the pathway cofactor biosynthesis; tetrahydrofolate biosynthesis; 5,6,7,8-tetrahydrofolate from 7,8-dihydrofolate: step 1/1. In terms of biological role, bifunctional enzyme. Involved in de novo dTMP biosynthesis. Key enzyme in folate metabolism. Catalyzes an essential reaction for de novo glycine and purine synthesis, DNA precursor synthesis, and for the conversion of dUMP to dTMP. The chain is Bifunctional dihydrofolate reductase-thymidylate synthase from Plasmodium berghei (strain Anka).